A 292-amino-acid chain; its full sequence is Shikimate dehydrogenase (NADP(+)) (292 aa).

Shikimate contacts are provided by residues 22 to 24 (SLS) and Ser69. Lys73 acts as the Proton acceptor in catalysis. Residues Asn94 and Asp111 each contribute to the shikimate site. Residues 135-139 (GVGGA) and Ile236 each bind NADP(+). Shikimate is bound at residue Tyr238. Position 260 (Gly260) interacts with NADP(+).

Belongs to the shikimate dehydrogenase family. Homodimer.

It catalyses the reaction shikimate + NADP(+) = 3-dehydroshikimate + NADPH + H(+). The protein operates within metabolic intermediate biosynthesis; chorismate biosynthesis; chorismate from D-erythrose 4-phosphate and phosphoenolpyruvate: step 4/7. Functionally, involved in the biosynthesis of the chorismate, which leads to the biosynthesis of aromatic amino acids. Catalyzes the reversible NADPH linked reduction of 3-dehydroshikimate (DHSA) to yield shikimate (SA). This Streptococcus pyogenes serotype M3 (strain ATCC BAA-595 / MGAS315) protein is Shikimate dehydrogenase (NADP(+)).